A 290-amino-acid polypeptide reads, in one-letter code: Glycine--tRNA ligase alpha subunit (290 aa).

The protein belongs to the class-II aminoacyl-tRNA synthetase family. As to quaternary structure, tetramer of two alpha and two beta subunits.

The protein localises to the cytoplasm. The enzyme catalyses tRNA(Gly) + glycine + ATP = glycyl-tRNA(Gly) + AMP + diphosphate. The polypeptide is Glycine--tRNA ligase alpha subunit (Fusobacterium nucleatum subsp. nucleatum (strain ATCC 25586 / DSM 15643 / BCRC 10681 / CIP 101130 / JCM 8532 / KCTC 2640 / LMG 13131 / VPI 4355)).